The chain runs to 188 residues: Elongation factor P (188 aa).

Lys34 is modified (N6-(3,6-diaminohexanoyl)-5-hydroxylysine).

It belongs to the elongation factor P family. Post-translationally, is beta-lysylated on the epsilon-amino group of Lys-34 by the combined action of EpmA and EpmB, and then hydroxylated on the C5 position of the same residue by EpmC. Lysylation is critical for the stimulatory effect of EF-P on peptide-bond formation. The lysylation moiety would extend toward the peptidyltransferase center and stabilize the terminal 3-CCA end of the tRNA. The hydroxylation of the C5 position on Lys-34 would allow additional potential stabilizing hydrogen-bond interactions with the P-tRNA.

The protein resides in the cytoplasm. It functions in the pathway protein biosynthesis; polypeptide chain elongation. Involved in peptide bond synthesis. Alleviates ribosome stalling that occurs when 3 or more consecutive Pro residues or the sequence PPG is present in a protein, possibly by augmenting the peptidyl transferase activity of the ribosome. Modification of Lys-34 is required for alleviation. This chain is Elongation factor P, found in Salmonella arizonae (strain ATCC BAA-731 / CDC346-86 / RSK2980).